We begin with the raw amino-acid sequence, 381 residues long: Tetraacyldisaccharide 4'-kinase (381 aa).

Residue 78-85 (AVGGTGKT) coordinates ATP.

This sequence belongs to the LpxK family.

It catalyses the reaction a lipid A disaccharide + ATP = a lipid IVA + ADP + H(+). The protein operates within glycolipid biosynthesis; lipid IV(A) biosynthesis; lipid IV(A) from (3R)-3-hydroxytetradecanoyl-[acyl-carrier-protein] and UDP-N-acetyl-alpha-D-glucosamine: step 6/6. Transfers the gamma-phosphate of ATP to the 4'-position of a tetraacyldisaccharide 1-phosphate intermediate (termed DS-1-P) to form tetraacyldisaccharide 1,4'-bis-phosphate (lipid IVA). This is Tetraacyldisaccharide 4'-kinase from Syntrophobacter fumaroxidans (strain DSM 10017 / MPOB).